The chain runs to 772 residues: Semaphorin-3A (772 aa).

Residues 1 to 22 (MGWLRGIALLSLGVLLAGRVNC) form the signal peptide. Residues 31–514 (RLKLSYKEML…SATGVSQLPL (484 aa)) form the Sema domain. An N-linked (GlcNAc...) asparagine glycan is attached at Asn-53. Cys-103 and Cys-114 are oxidised to a cystine. An N-linked (GlcNAc...) asparagine glycan is attached at Asn-125. Cystine bridges form between Cys-132–Cys-141, Cys-269–Cys-381, Cys-293–Cys-341, and Cys-517–Cys-535. The Ig-like C2-type domain maps to 576 to 665 (PSGQTLEEKI…GFIQTLLKVT (90 aa)). Asn-591 is a glycosylation site (N-linked (GlcNAc...) asparagine). Cysteines 650 and 723 form a disulfide. Residues 730–772 (DRKQRRQRPANAQVNTNKWKHLQENKKGRNRRTHEFERAPRSV) are disordered. Residues 750–772 (HLQENKKGRNRRTHEFERAPRSV) are compositionally biased toward basic and acidic residues.

The protein belongs to the semaphorin family. Expressed at relatively high levels in brain and muscle, moderate levels in lung, bursa, and heart and virtually absent in liver. Collapsin-1, -2, -3, and -5 bind to overlapping but distinct axon tracts.

It localises to the secreted. In terms of biological role, induces the collapse and paralysis of neuronal growth cones. Could serve as a ligand that guides specific growth cones by a motility-inhibiting mechanism. Binds to neuropilin. This chain is Semaphorin-3A (SEMA3A), found in Gallus gallus (Chicken).